The sequence spans 571 residues: GABA-specific permease (571 aa).

Topologically, residues Met-1 to Gln-73 are cytoplasmic. A helical transmembrane segment spans residues Phe-74–Ala-94. Residues Ser-95–Pro-105 lie on the Vacuolar side of the membrane. A helical transmembrane segment spans residues Ala-106 to Met-126. Residues Ala-127–Glu-153 are Cytoplasmic-facing. A helical membrane pass occupies residues Ile-154 to Ile-174. The Vacuolar portion of the chain corresponds to Asp-175–Ser-198. A helical membrane pass occupies residues Gly-199–Ala-219. At Ser-220–Thr-228 the chain is on the cytoplasmic side. Residues Leu-229 to Thr-249 form a helical membrane-spanning segment. Residues Lys-250–Asp-271 lie on the Vacuolar side of the membrane. A helical membrane pass occupies residues Trp-272 to Ser-292. Over Phe-293 to Ile-312 the chain is Cytoplasmic. Residues Gly-313 to Met-333 traverse the membrane as a helical segment. Topologically, residues Ala-334–Trp-364 are vacuolar. A helical transmembrane segment spans residues Ala-365–Thr-385. Topologically, residues Ala-386–Pro-416 are cytoplasmic. The helical transmembrane segment at Phe-417–Asp-437 threads the bilayer. At Asp-438 to Thr-441 the chain is on the vacuolar side. A helical membrane pass occupies residues Asp-442–Phe-462. Residues Arg-463 to Trp-482 are Cytoplasmic-facing. A helical membrane pass occupies residues Ser-483–Phe-503. The Vacuolar portion of the chain corresponds to Pro-504 to Thr-514. A helical membrane pass occupies residues Met-515 to Val-535. Over Tyr-536 to Pro-571 the chain is Cytoplasmic.

Belongs to the amino acid-polyamine-organocation (APC) superfamily. Amino acid/choline transporter (ACT) (TC 2.A.3.4) family.

It is found in the vacuole membrane. In terms of biological role, required for high-affinity, high-specificity GABA transport. Also transports putrescine. The protein is GABA-specific permease (UGA4) of Saccharomyces cerevisiae (strain ATCC 204508 / S288c) (Baker's yeast).